Consider the following 487-residue polypeptide: Meiotic recombination protein SPO11-4 (487 aa).

The segment at 1 to 56 (MDDSTDDDSYHPRKHYAYDRQVSSSRWRTSREYIRGPGPETHTTESAQDGQDPPAG) is disordered. One can recognise a Topo IIA-type catalytic domain in the interval 119 to 252 (KSRVEARKTL…LGIIAAEKGI (134 aa)). Tyr-213 serves as the catalytic O-(5'-phospho-DNA)-tyrosine intermediate. Mg(2+) contacts are provided by Glu-301 and Asp-353.

Belongs to the TOP6A family. In terms of assembly, homodimer. Interacts with TOP6B. The cofactor is Mg(2+).

The protein resides in the nucleus. The catalysed reaction is ATP-dependent breakage, passage and rejoining of double-stranded DNA.. Required for meiotic recombination. Mediates DNA cleavage that forms the double-strand breaks (DSB) that initiate meiotic recombination. Possesses double-stranded DNA cleavage activity in vitro. The sequence is that of Meiotic recombination protein SPO11-4 (SPO11-4) from Oryza sativa subsp. japonica (Rice).